We begin with the raw amino-acid sequence, 544 residues long: CTP synthase (544 aa).

The interval 1–266 is amidoligase domain; the sequence is MTKFIFVTGG…DDLICERFGL (266 aa). Residue serine 13 participates in CTP binding. Serine 13 contributes to the UTP binding site. ATP is bound by residues 14 to 19 and aspartate 71; that span reads SLGKGI. Mg(2+) contacts are provided by aspartate 71 and glutamate 140. CTP contacts are provided by residues 147-149, 187-192, and lysine 223; these read DIE and KTKPTQ. UTP is bound by residues 187 to 192 and lysine 223; that span reads KTKPTQ. In terms of domain architecture, Glutamine amidotransferase type-1 spans 291–543; it reads TVAMVGKYVE…VKAAKNYSEA (253 aa). Glycine 354 is a binding site for L-glutamine. Cysteine 381 acts as the Nucleophile; for glutamine hydrolysis in catalysis. Residues 382 to 385, glutamate 404, and arginine 471 contribute to the L-glutamine site; that span reads LGMQ. Active-site residues include histidine 516 and glutamate 518.

It belongs to the CTP synthase family. Homotetramer.

It catalyses the reaction UTP + L-glutamine + ATP + H2O = CTP + L-glutamate + ADP + phosphate + 2 H(+). The enzyme catalyses L-glutamine + H2O = L-glutamate + NH4(+). It carries out the reaction UTP + NH4(+) + ATP = CTP + ADP + phosphate + 2 H(+). It functions in the pathway pyrimidine metabolism; CTP biosynthesis via de novo pathway; CTP from UDP: step 2/2. With respect to regulation, allosterically activated by GTP, when glutamine is the substrate; GTP has no effect on the reaction when ammonia is the substrate. The allosteric effector GTP functions by stabilizing the protein conformation that binds the tetrahedral intermediate(s) formed during glutamine hydrolysis. Inhibited by the product CTP, via allosteric rather than competitive inhibition. Functionally, catalyzes the ATP-dependent amination of UTP to CTP with either L-glutamine or ammonia as the source of nitrogen. Regulates intracellular CTP levels through interactions with the four ribonucleotide triphosphates. The sequence is that of CTP synthase from Psychrobacter cryohalolentis (strain ATCC BAA-1226 / DSM 17306 / VKM B-2378 / K5).